Here is a 1130-residue protein sequence, read N- to C-terminus: MPVQAPQWTDFLSCPICTQTFDETIRKPISLGCGHTVCKMCLNKLHRKACPFDQTTINTDIELLPVNSALLQLVGAQIPEQQPITLCSGVEDTKHYEEAKKCVEELALYLKPLSSARGVGLNSTTQSVLSRPMQRKLVTLVHCQLVEEEGRIRAMRAARSLGERTVTELILQHQNPQQLSSNLWAAVRARGCQFLGPAMQEEALKLVLLALEDGSALSRKVLVLFVVQRLEPRFPQASKTSIGHVVQLLYRASCFKVTKRDEDSSLMQLKEEFRTYEALRREHDSQIVQIAMEAGLRIAPDQWSSLLYGDQSHKSHMQSIIDKLQTPASFAQSVQELTIALQRTGDPANLNRLRPHLELLANIDPSPDAPPPTWEQLENGLVAVRTVVHGLVDYIQNHSKKGADQQQPPQHSKYKTYMCRDMKQRGGCPRGASCTFAHSQEELEKFRKMNKRLVPRRPLSASLGQLNEVGLPSAPILSDESAVDLSNRKPPALPNGIASSGSTVTQLIPRGTDPSFDSSLKPVKLDHLSSSAPGSPPDLLESAPKSISALPVNPHPVPPRGPTDLPPMPVTKPIQMVPRGSQLYPAQQADVYYQDPRGSAPAFETAPYQQGMYYTPPPCVSRFVRPPPSAPEPGPPYLDHYSPYLQDRVINSQYGTQPQQYPPMYPAHYDGRRVYPAQSYTREEMFRESPIPIDIPSAAVPSYVPESRERYQQVEGYYPVAPHPAQIRPSYPRDPPYSRLPPPQPHPSLDELHRRRKEIMAQLEERKVISPPPFAPSPTLPPAFHPEEFLDEDLKVAGKYKANDYSQYSPWSCDTIGSYIGTKDAKPKDVVAAGSVEMMNVESKGTREQRLDLQRRAVETSDDDLIPFGDRPTVSRFGAISRTSKTLYQGAGPLQAIAPQGAPTKSINISDYSAYGAHGGWGDSPYSPHANIPPQGHFIEREKMSMAEVASHGKPLLSAEREQLRLELQQLNHQISQQTQLRGLEAVSNRLVLQREVNTLASQPQPPQLPPKWPGMISSEQLSLELHQVEREIGKRTRELSMENQCSVDMKSKLGTSKQAENGQPEPQNKIRTEDLTLTFSDVPNGSALTQENLSLLSNKTSSLNLSEDSEGGGDNNDSQRSGVVSNSAP.

C14, C17, C33, H35, C38, C50, and D53 together coordinate Zn(2+). The segment at 14–54 adopts an RING-type; degenerate zinc-finger fold; that stretch reads CPICTQTFDETIRKPISLGCGHTVCKMCLNKLHRKACPFDQ. An HEPN-N region spans residues 128 to 176; it reads VLSRPMQRKLVTLVHCQLVEEEGRIRAMRAARSLGERTVTELILQHQNP. Residues 177–326 form an ROQ region; that stretch reads QQLSSNLWAA…MQSIIDKLQT (150 aa). The tract at residues 327 to 399 is HEPN-C; the sequence is PASFAQSVQE…GLVDYIQNHS (73 aa). The segment at 413–441 adopts a C3H1-type zinc-finger fold; that stretch reads KYKTYMCRDMKQRGGCPRGASCTFAHSQE. S462 carries the phosphoserine modification. Disordered stretches follow at residues 493–567 and 722–750; these read LPNG…DLPP and PHPA…PSLD. Residues 497–506 are compositionally biased toward polar residues; it reads IASSGSTVTQ. S531 and S535 each carry phosphoserine. Pro residues-rich tracts occupy residues 553–567 and 732–746; these read NPHP…DLPP and PRDP…PQPH. Phosphoserine occurs at positions 861, 1107, and 1110. The segment at 1100–1130 is disordered; sequence KTSSLNLSEDSEGGGDNNDSQRSGVVSNSAP. A compositionally biased stretch (polar residues) spans 1116–1130; sequence NNDSQRSGVVSNSAP.

In terms of assembly, interacts with DDX6 and EDC4. Interacts with CCR4-NOT deadenylase complex. Interacts with RC3H1; the interaction is RNA independent. Post-translationally, proteolytically cleaved after Arg-510 and Arg-579 by MALT1 in activated CD4(+) T cells; cleavage at Arg-510 and Arg-579 is critical for promoting RC3H1 degradation in response to T-cell receptor (TCR) stimulation, and hence is necessary for prolonging the stability of a set of mRNAs controlling Th17 cell differentiation. As to expression, widely expressed, with highest levels in lymph node and thymus and slightly lesser amounts in brain, lung, and spleen (at protein level). Very weak expression in heart, muscle, and kidney (at protein level). Expressed in CD4(+) helper T-cells (at protein level).

It localises to the cytoplasm. The protein resides in the P-body. It is found in the cytoplasmic granule. The enzyme catalyses S-ubiquitinyl-[E2 ubiquitin-conjugating enzyme]-L-cysteine + [acceptor protein]-L-lysine = [E2 ubiquitin-conjugating enzyme]-L-cysteine + N(6)-ubiquitinyl-[acceptor protein]-L-lysine.. The protein operates within protein modification; protein ubiquitination. In terms of biological role, post-transcriptional repressor of mRNAs containing a conserved stem loop motif, called constitutive decay element (CDE), which is often located in the 3'-UTR, as in HMGXB3, ICOS, IER3, NFKBID, NFKBIZ, PPP1R10, TNF, TNFRSF4 and in many more mRNAs. Cleaves translationally inactive mRNAs harboring a stem-loop (SL), often located in their 3'-UTRs, during the early phase of inflammation in a helicase UPF1-independent manner. Binds to CDE and promotes mRNA deadenylation and degradation. This process does not involve miRNAs. In follicular helper T (Tfh) cells, represses of ICOS and TNFRSF4/Ox40 expression, thus preventing spontaneous Tfh cell differentiation, germinal center B-cell differentiation in the absence of immunization and autoimmunity. In resting or LPS-stimulated macrophages, controls inflammation by suppressing TNF expression. Also recognizes CDE in its own mRNA and in that of paralogous RC3H2, possibly leading to feedback loop regulation. Inhibits cooperatively with ZC3H12A the differentiation of helper T cells Th17 in lungs. They repress target mRNA encoding the Th17 cell-promoting factors IL6, ICOS, REL, IRF4, NFKBID and NFKBIZ. The cooperation requires RNA-binding by RC3H1 and the nuclease activity of ZC3H12A. Recognizes and binds mRNAs containing a hexaloop stem-loop motif, called alternative decay element (ADE). Together with ZC3H12A, destabilizes TNFRSF4/OX40 mRNA by binding to the conserved stem loop structure in its 3'UTR. Able to interact with double-stranded RNA. miRNA-binding protein that regulates microRNA homeostasis. Enhances DICER-mediated processing of pre-MIR146a but reduces mature MIR146a levels through an increase of 3' end uridylation. Both inhibits ICOS mRNA expression and they may act together to exert the suppression. Acts as a ubiquitin E3 ligase. Pairs with E2 enzymes UBE2A, UBE2B, UBE2D2, UBE2F, UBE2G1, UBE2G2 and UBE2L3 and produces polyubiquitin chains. Shows the strongest activity when paired with UBE2N:UBE2V1 or UBE2N:UBE2V2 E2 complexes and generate both short and long polyubiquitin chains. This Mus musculus (Mouse) protein is Roquin-1.